Reading from the N-terminus, the 467-residue chain is Tyrosine phenol-lyase (467 aa).

K268 carries the post-translational modification N6-(pyridoxal phosphate)lysine.

The protein belongs to the beta-eliminating lyase family. Homotetramer. It depends on pyridoxal 5'-phosphate as a cofactor.

It catalyses the reaction L-tyrosine + H2O = phenol + pyruvate + NH4(+). The sequence is that of Tyrosine phenol-lyase from Nostoc punctiforme (strain ATCC 29133 / PCC 73102).